A 107-amino-acid chain; its full sequence is MSISLTESAAQRVSSFLSHRGKGVGLRLGVRTSGCSGMAYLLEFADMINEDDTVFEDKGVKVIVDGKSMVYLDGTELDFVKEGLNEGFKFNNPNVSSECGCGESFNV.

3 residues coordinate Fe cation: C35, C99, and C101.

Belongs to the HesB/IscA family. As to quaternary structure, homodimer; may form tetramers and higher multimers. It depends on Fe cation as a cofactor.

Functionally, is able to transfer iron-sulfur clusters to apo-ferredoxin. Multiple cycles of [2Fe2S] cluster formation and transfer are observed, suggesting that IscA acts catalytically. Recruits intracellular free iron so as to provide iron for the assembly of transient iron-sulfur cluster in IscU in the presence of IscS, L-cysteine and the thioredoxin reductase system TrxA/TrxB. This chain is Iron-binding protein IscA, found in Photorhabdus laumondii subsp. laumondii (strain DSM 15139 / CIP 105565 / TT01) (Photorhabdus luminescens subsp. laumondii).